A 236-amino-acid polypeptide reads, in one-letter code: Leucyl/phenylalanyl-tRNA--protein transferase (236 aa).

This sequence belongs to the L/F-transferase family.

It is found in the cytoplasm. It catalyses the reaction N-terminal L-lysyl-[protein] + L-leucyl-tRNA(Leu) = N-terminal L-leucyl-L-lysyl-[protein] + tRNA(Leu) + H(+). The catalysed reaction is N-terminal L-arginyl-[protein] + L-leucyl-tRNA(Leu) = N-terminal L-leucyl-L-arginyl-[protein] + tRNA(Leu) + H(+). The enzyme catalyses L-phenylalanyl-tRNA(Phe) + an N-terminal L-alpha-aminoacyl-[protein] = an N-terminal L-phenylalanyl-L-alpha-aminoacyl-[protein] + tRNA(Phe). In terms of biological role, functions in the N-end rule pathway of protein degradation where it conjugates Leu, Phe and, less efficiently, Met from aminoacyl-tRNAs to the N-termini of proteins containing an N-terminal arginine or lysine. This Vibrio atlanticus (strain LGP32) (Vibrio splendidus (strain Mel32)) protein is Leucyl/phenylalanyl-tRNA--protein transferase.